The chain runs to 122 residues: Nodulation protein NolR (122 aa).

The region spanning 15–109 (EKHEDAEIAA…ALSDIYGDDT (95 aa)) is the HTH arsR-type domain. Residues 49–68 (VGALAHKVGLSQSALSQHLS) constitute a DNA-binding region (H-T-H motif).

In terms of assembly, binds to the operator site in homodimeric form.

In terms of biological role, negative transacting factor controlling the nod regulon. May control the expression of nodD1, nodD2, nodD3 and nodABC genes. The protein is Nodulation protein NolR (nolR) of Rhizobium meliloti (Ensifer meliloti).